We begin with the raw amino-acid sequence, 205 residues long: Protein MIS12 homolog (205 aa).

Residues 108–205 (PYSEEDFQHL…EKESKRLKIS (98 aa)) adopt a coiled-coil conformation.

The protein belongs to the mis12 family. Component of the MIS12 complex composed of MIS12, DSN1, NSL1 and PMF1. Also interacts with KNL1, CBX3, CBX5, NDC80 and ZWINT.

It is found in the chromosome. The protein resides in the centromere. The protein localises to the kinetochore. In terms of biological role, part of the MIS12 complex which is required for normal chromosome alignment and segregation and for kinetochore formation during mitosis. Essential for proper kinetochore microtubule attachments. The polypeptide is Protein MIS12 homolog (Homo sapiens (Human)).